We begin with the raw amino-acid sequence, 459 residues long: Protein FAM90A27P (459 aa).

Basic residues predominate over residues 1-10; sequence MARHSVHHQA. Disordered regions lie at residues 1–41, 74–136, 153–239, and 259–459; these read MARH…ESRV, SHKE…WKEP, HTTK…ALQP, and PDAD…SDSD. A compositionally biased stretch (basic and acidic residues) spans 125–136; the sequence is PQEKMQEAWKEP. Residues 184–194 are compositionally biased toward polar residues; sequence HNDSPQLSTCG. Low complexity predominate over residues 341 to 353; the sequence is KATAETAATKTAT. The span at 415-427 shows a compositional bias: polar residues; it reads PPENSASAQSPRF.

It belongs to the FAM90 family.

This chain is Protein FAM90A27P (FAM90A27P), found in Homo sapiens (Human).